Reading from the N-terminus, the 612-residue chain is uncharacterized protein (612 aa).

Residues 6 to 32 (CLYCRRRKIKCDKNRPCHNCFVAKREC) constitute a DNA-binding region (zn(2)-C6 fungal-type).

It localises to the cytoplasm. It is found in the nucleus. This is an uncharacterized protein from Schizosaccharomyces pombe (strain 972 / ATCC 24843) (Fission yeast).